The sequence spans 132 residues: Small ribosomal subunit protein uS8 (132 aa).

The protein belongs to the universal ribosomal protein uS8 family. As to quaternary structure, part of the 30S ribosomal subunit. Contacts proteins S5 and S12.

Functionally, one of the primary rRNA binding proteins, it binds directly to 16S rRNA central domain where it helps coordinate assembly of the platform of the 30S subunit. The sequence is that of Small ribosomal subunit protein uS8 from Corynebacterium efficiens (strain DSM 44549 / YS-314 / AJ 12310 / JCM 11189 / NBRC 100395).